The chain runs to 440 residues: Doublesex- and mab-3-related transcription factor A2 (440 aa).

Positions 59 to 106 (CARCRNHGVVSALKGHKRYCRWKDCMCAKCTLIAERQRVMAAQVALRR) form a DNA-binding region, DM. The disordered stretch occupies residues 167–261 (PKTPLPGTVT…SPSSAASRQM (95 aa)). Residues 199–213 (DMRHGSGSENGDRES) show a composition bias toward basic and acidic residues. Over residues 229-241 (TPGSISPIGSDSG) the composition is skewed to low complexity. Polar residues predominate over residues 251-261 (PSPSSAASRQM). Positions 261-296 (MNAIDILTRVFPNHKRSVLELVLQGCGKNVVQAIEQ) constitute a DMA domain.

Belongs to the DMRT family. In terms of tissue distribution, restrictively expressed in brain and developing germ cells, especially in spermatogonia, spermatocytes, spermatids, and sperm cells, and in developing oocytes, including early perinucleolus stage oocyte, late yolk vesicle stage oocyte, and oil drop stage oocyte.

It localises to the nucleus. Functionally, may be involved in sexual development. The protein is Doublesex- and mab-3-related transcription factor A2 (dmrta2) of Danio rerio (Zebrafish).